Here is a 484-residue protein sequence, read N- to C-terminus: Cholesterol 22-hydroxylase CYP90B27 (484 aa).

The helical transmembrane segment at 2–22 threads the bilayer; it reads ALELILVLSSLIVILIIFFSF. Cys-429 serves as a coordination point for heme.

The protein belongs to the cytochrome P450 family. In terms of tissue distribution, expressed in roots.

Its subcellular location is the membrane. The catalysed reaction is cholesterol + reduced [NADPH--hemoprotein reductase] + O2 = (22R)-hydroxycholesterol + oxidized [NADPH--hemoprotein reductase] + H2O + H(+). Its pathway is steroid metabolism; cholesterol metabolism. Functionally, involved in the biosynthesis of steroidal saponins and alkaloids natural products from cholesterol such as spirostane-type saponins and polyphyllins, compounds with pharmacological activity. Catalyzes the C-22 hydroxylation of cholesterol to form 22R-hydroxycholesterol. This Paris polyphylla (Daiswa polyphylla) protein is Cholesterol 22-hydroxylase CYP90B27.